Here is a 202-residue protein sequence, read N- to C-terminus: Recoverin (202 aa).

Gly-2 carries N-myristoyl glycine lipidation. Cys-39 carries the cysteine sulfenic acid (-SOH) modification. EF-hand domains follow at residues 41-59 (SGRI…FFPD), 61-96 (DPKA…TTAG), 97-132 (KPTQ…IFKM), and 147-182 (TPEK…NKEI). Ca(2+) contacts are provided by Asp-74, Asn-76, Asp-78, Thr-80, Glu-85, Asp-110, Asp-112, Asn-114, Thr-116, and Glu-121. The interaction with GRK1 stretch occupies residues 189–192 (EPQK).

This sequence belongs to the recoverin family. Homodimer; disulfide-linked. Homodimerization is caused by prolonged intense illumination. May form a complex composed of RHO, GRK1 and RCVRN in a Ca(2+)-dependent manner; RCVRN prevents the interaction between GRK1 and RHO. Interacts (via C-terminus) with GRK1 (via N-terminus); the interaction is Ca(2+)-dependent. In terms of processing, the N-terminal glycine is linked to one of four different types of acyl groups. The most abundant is myristoleate (14:1), but 14:0, 14:2, and 12:0 acyl residues are also present. The Ca(2+) induced exposure of the myristoyl group, known as the calcium-myristoyl switch, promotes RCVRN binding to the photoreceptor cell membranes only when intracellular Ca(2+) concentration is high. Post-translationally, oxidation on Cys-39 occurs in response to prolonged intense illumination and results in the formation of disulfide homodimers, and to a lesser extent disulfide-linked heterodimers. As to expression, expressed in rod photoreceptors in the retina (at protein level).

It is found in the photoreceptor inner segment. Its subcellular location is the cell projection. It localises to the cilium. The protein localises to the photoreceptor outer segment. The protein resides in the photoreceptor outer segment membrane. It is found in the perikaryon. In terms of biological role, acts as a calcium sensor and regulates phototransduction of cone and rod photoreceptor cells. Modulates light sensitivity of cone photoreceptor in dark and dim conditions. In response to high Ca(2+) levels induced by low light levels, prolongs RHO/rhodopsin activation in rod photoreceptor cells by binding to and inhibiting GRK1-mediated phosphorylation of RHO/rhodopsin. Plays a role in scotopic vision/enhances vision in dim light by enhancing signal transfer between rod photoreceptors and rod bipolar cells. Improves rod photoreceptor sensitivity in dim light and mediates response of rod photoreceptors to facilitate detection of change and motion in bright light. This is Recoverin (Rcvrn) from Mus musculus (Mouse).